The sequence spans 196 residues: MDNVPLVIASGNKGKIGEFKKLLDDFPIDLLTQPVGFEIEETGSTFMENARIKAIAVSQATGNLSLADDSGLSVEALGGAPGIYSSRYASSDKQRIEKLLAELKPFSNRKAKFECALCIASGEKVLIEVSGFCEGLITFFPKGQNGFGYDPIFEVSGLGETYAEMDHEKKKHIGHRGNAFKLLIPKLKQLLGSMKK.

10 to 15 (SGNKGK) is a substrate binding site. E40 and D69 together coordinate Mg(2+). Catalysis depends on D69, which acts as the Proton acceptor. Substrate-binding positions include S70, 147–150 (FGYD), K170, and 175–176 (HR).

This sequence belongs to the HAM1 NTPase family. In terms of assembly, homodimer. Mg(2+) serves as cofactor.

It catalyses the reaction XTP + H2O = XMP + diphosphate + H(+). The enzyme catalyses dITP + H2O = dIMP + diphosphate + H(+). The catalysed reaction is ITP + H2O = IMP + diphosphate + H(+). Its function is as follows. Pyrophosphatase that catalyzes the hydrolysis of nucleoside triphosphates to their monophosphate derivatives, with a high preference for the non-canonical purine nucleotides XTP (xanthosine triphosphate), dITP (deoxyinosine triphosphate) and ITP. Seems to function as a house-cleaning enzyme that removes non-canonical purine nucleotides from the nucleotide pool, thus preventing their incorporation into DNA/RNA and avoiding chromosomal lesions. In Prochlorococcus marinus (strain NATL1A), this protein is dITP/XTP pyrophosphatase.